Reading from the N-terminus, the 567-residue chain is Alpha-glucosidase (567 aa).

The signal sequence occupies residues 1 to 17 (MKAVIVFCLMALSIVDA). N-linked (GlcNAc...) asparagine glycosylation is found at Asn-88 and Asn-123. Asp-223 acts as the Nucleophile in catalysis. An N-linked (GlcNAc...) asparagine glycan is attached at Asn-247. The active-site Proton donor is the Glu-286. 5 N-linked (GlcNAc...) asparagine glycosylation sites follow: Asn-290, Asn-313, Asn-319, Asn-499, and Asn-507.

Monomer. In terms of tissue distribution, expressed specifically in the hypopharyngeal glands of worker bees. Also found in the brain of worker bees (at protein level).

The catalysed reaction is Hydrolysis of terminal, non-reducing (1-&gt;4)-linked alpha-D-glucose residues with release of alpha-D-glucose.. Converts sucrose in nectar to glucose and fructose. The protein is Alpha-glucosidase of Apis mellifera (Honeybee).